The sequence spans 610 residues: WD repeat-containing protein 46 (610 aa).

The disordered stretch occupies residues 1–103 (METAPKPGKD…TQDPFPGPAP (103 aa)). Positions 7–19 (PGKDVPPKKDKLQ) are enriched in basic and acidic residues. Serine 41 carries the post-translational modification Phosphoserine. The span at 65–77 (KKSRISKKPQVPK) shows a compositional bias: basic residues. 6 WD repeats span residues 193-234 (LRQF…CEIN), 235-272 (VMEA…LHCI), 274-312 (RCDR…IVAA), 315-354 (ARAG…PLAK), 357-396 (CHRG…QPLS), and 399-436 (TLPH…SPPS). A disordered region spans residues 538–610 (ERLGYDPQAK…RPSALDRFVR (73 aa)). Basic and acidic residues predominate over residues 572-582 (VMDEEHRDKVR).

As to quaternary structure, part of the small subunit (SSU) processome, composed of more than 70 proteins and the RNA chaperone small nucleolar RNA (snoRNA) U3. Interacts with DDX21, NCL, NOP2 and EBNA1BP2.

Its subcellular location is the nucleus. It localises to the nucleolus. Its function is as follows. Scaffold component of the nucleolar structure. Required for localization of DDX21 and NCL to the granular compartment of the nucleolus. Part of the small subunit (SSU) processome, first precursor of the small eukaryotic ribosomal subunit. During the assembly of the SSU processome in the nucleolus, many ribosome biogenesis factors, an RNA chaperone and ribosomal proteins associate with the nascent pre-rRNA and work in concert to generate RNA folding, modifications, rearrangements and cleavage as well as targeted degradation of pre-ribosomal RNA by the RNA exosome. The protein is WD repeat-containing protein 46 (WDR46) of Homo sapiens (Human).